Consider the following 352-residue polypeptide: Glycerol-3-phosphate dehydrogenase 1-like protein (352 aa).

Gly13 to Gly18 provides a ligand contact to NAD(+). Lys123 provides a ligand contact to substrate. Residue Ala156 coordinates NAD(+). Lys207 serves as the catalytic Proton acceptor. Positions 272, 299, and 301 each coordinate NAD(+). Arg272–Asn273 lines the substrate pocket.

It belongs to the NAD-dependent glycerol-3-phosphate dehydrogenase family.

The protein localises to the cytoplasm. The catalysed reaction is sn-glycerol 3-phosphate + NAD(+) = dihydroxyacetone phosphate + NADH + H(+). Plays a role in regulating cardiac sodium current. The sequence is that of Glycerol-3-phosphate dehydrogenase 1-like protein (gpd1l) from Xenopus tropicalis (Western clawed frog).